Here is a 273-residue protein sequence, read N- to C-terminus: MATDSFIKLNPISFNRARFDLRDFAGISPKSISSLCCISPRLISCNHFSPRTLISGENGNILFSKKKIPAFVRCQTSLGIGRNQKWWEKELKPNMKSVTSPQDLVVSLRNAGDKLVVVDFFSPSCGGCKALHPKICKIAEKNPEVEFLQVNYEEHRSLCQSLNIHVLPFFRFYRGSSGRVCSFSCTNATIRKFKEALEKHGREQCSIGETKGLEEKELVAMAANKDLSFDYKPTSCGNIQEQKKKEIFLPKSPTFNKQKEVEHSLLLVSPAPA.

A chloroplast-targeting transit peptide spans 1–44; the sequence is MATDSFIKLNPISFNRARFDLRDFAGISPKSISSLCCISPRLIS. In terms of domain architecture, Thioredoxin spans 62–202; that stretch reads LFSKKKIPAF…FKEALEKHGR (141 aa). Residues Cys125 and Cys128 each act as nucleophile in the active site. Cys125 and Cys128 form a disulfide bridge.

The protein belongs to the thioredoxin family.

The protein resides in the plastid. It localises to the chloroplast. Its function is as follows. Probable thiol-disulfide oxidoreductase that may participate in various redox reactions. The polypeptide is Thioredoxin-like 1-3, chloroplastic (Arabidopsis thaliana (Mouse-ear cress)).